The chain runs to 231 residues: Staphylococcal superantigen-like 7 (231 aa).

The signal sequence occupies residues Met-1 to Ala-30.

Belongs to the staphylococcal/streptococcal toxin family. In terms of assembly, interacts with host IgA and complement C5; these interactions inhibits complement activation.

It localises to the secreted. Its function is as follows. Plays a role in the inhibition of host complement-mediated lysis and serum bactericidal activity by interacting with complement component C5. Affects all three pathways of complement activation and inhibits the cleavage of C5 by preventing its binding to C5 convertases. In turn, prevents C5a-mediated neutrophil migration. The chain is Staphylococcal superantigen-like 7 from Staphylococcus aureus (strain NCTC 8325 / PS 47).